Here is a 359-residue protein sequence, read N- to C-terminus: NAC domain-containing protein 45 (359 aa).

One can recognise an NAC domain in the interval 19-185; it reads LPPGFRFHPT…EWVVCKVFHK (167 aa). A DNA-binding region spans residues 130 to 191; sequence VGMKKTLVFY…VFHKKGDDRE (62 aa).

Expressed in roots. Expressed at low levels in leaves, stems and panicles.

The protein localises to the nucleus. Its function is as follows. Transcription activator involved in responses to drought stress and salt stress. Transactivates the stress response genes LEA19 and PM19L. The polypeptide is NAC domain-containing protein 45 (Oryza sativa subsp. japonica (Rice)).